A 142-amino-acid polypeptide reads, in one-letter code: Baculoviral IAP repeat-containing protein 5 (142 aa).

A BIR repeat occupies Arg-18–Ser-88. At Ser-20 the chain carries Phosphoserine; by AURKC. Lys-23 bears the N6-acetyllysine mark. Thr-34 carries the phosphothreonine; by CDK1 and CDK15 modification. Thr-48 bears the Phosphothreonine mark. The Zn(2+) site is built by Cys-57, Cys-60, His-77, and Cys-84. An N6-acetyllysine mark is found at Lys-90, Lys-110, Lys-112, and Lys-115. The residue at position 117 (Thr-117) is a Phosphothreonine; by AURKB. Lys-129 carries the N6-acetyllysine modification.

It belongs to the IAP family. Monomer or homodimer. Exists as a homodimer in the apo state and as a monomer in the CPC-bound state. The monomer protects cells against apoptosis more efficiently than the dimer. Only the dimeric form is capable of enhancing tubulin stability in cells. When phosphorylated, interacts with LAMTOR5/HBXIP; the resulting complex binds pro-CASP9, as well as active CASP9, but much less efficiently. Component of the chromosomal passenger complex (CPC) composed of at least BIRC5/survivin, CDCA8/borealin, INCENP, AURKB or AURKC; in the complex forms a triple-helix bundle-based subcomplex with INCENP and CDCA8. Interacts with JTB. Interacts (via BIR domain) with histone H3 phosphorylated at 'Thr-3' (H3pT3). Interacts with EVI5. Interacts with GTP-bound RAN in both the S and M phases of the cell cycle. Interacts with USP9X. Interacts with tubulin. Interacts with BIRC2/c-IAP1. The acetylated form at Lys-129 interacts with STAT3. The monomeric form deacetylated at Lys-129 interacts with XPO1/CRM1. The monomeric form interacts with XIAP/BIRC4. Both the dimeric and monomeric form can interact with DIABLO/SMAC. Interacts with BIRC6/bruce. Interacts with FBXL7; this interaction facilitates the polyubiquitination and subsequent proteasomal degradation of BIRC5 by the SCF(FBXL7) E3 ubiquitin-protein ligase complex. Post-translationally, ubiquitinated by the Cul9-RING ubiquitin-protein ligase complex, leading to its degradation. Ubiquitination is required for centrosomal targeting. Deubiquitinated by USP35 or USP38; leading to stabilization. In terms of processing, acetylation at Lys-129 results in its homodimerization, while deacetylation promotes the formation of monomers which heterodimerize with XPO1/CRM1 which facilitates its nuclear export. The acetylated form represses STAT3 transactivation. The dynamic equilibrium between its acetylation and deacetylation at Lys-129 determines its interaction with XPO1/CRM1, its subsequent subcellular localization, and its ability to inhibit STAT3 transactivation. In vitro phosphorylation at Thr-117 by AURKB prevents interaction with INCENP and localization to mitotic chromosomes. Phosphorylation at Thr-48 by CK2 is critical for its mitotic and anti-apoptotic activities. Phosphorylation at Thr-34 by CDK15 is critical for its anti-apoptotic activity. Phosphorylation at Ser-20 by AURKC is critical for regulation of proper chromosome alignment and segregation, and possibly cytokinesis.

The protein localises to the cytoplasm. It localises to the nucleus. Its subcellular location is the chromosome. The protein resides in the centromere. It is found in the cytoskeleton. The protein localises to the spindle. It localises to the kinetochore. Its subcellular location is the midbody. Functionally, multitasking protein that has dual roles in promoting cell proliferation and preventing apoptosis. Component of a chromosome passage protein complex (CPC) which is essential for chromosome alignment and segregation during mitosis and cytokinesis. Acts as an important regulator of the localization of this complex; directs CPC movement to different locations from the inner centromere during prometaphase to midbody during cytokinesis and participates in the organization of the center spindle by associating with polymerized microtubules. Involved in the recruitment of CPC to centromeres during early mitosis via association with histone H3 phosphorylated at 'Thr-3' (H3pT3) during mitosis. The complex with RAN plays a role in mitotic spindle formation by serving as a physical scaffold to help deliver the RAN effector molecule TPX2 to microtubules. May counteract a default induction of apoptosis in G2/M phase. The acetylated form represses STAT3 transactivation of target gene promoters. May play a role in neoplasia. Inhibitor of CASP3 and CASP7. Essential for the maintenance of mitochondrial integrity and function. This Felis catus (Cat) protein is Baculoviral IAP repeat-containing protein 5 (BIRC5).